Reading from the N-terminus, the 679-residue chain is Transmembrane protein 214-B (679 aa).

The interval 1–94 (MASGAPDGKW…KKKPQSGDSV (94 aa)) is disordered. The span at 18 to 30 (KSGERREGERKAL) shows a compositional bias: basic and acidic residues. Residues asparagine 70, asparagine 298, and asparagine 322 are each glycosylated (N-linked (GlcNAc...) asparagine). Transmembrane regions (helical) follow at residues 468 to 488 (GGFP…GSVL) and 606 to 626 (LLLH…EAAV).

This sequence belongs to the TMEM214 family. In terms of assembly, constitutively interacts with CASP4; required for the localization of procaspase 4 to the ER.

It is found in the endoplasmic reticulum membrane. Its function is as follows. Critical mediator, in cooperation with CASP4, of endoplasmic reticulum-stress induced apoptosis. Required or the activation of CASP4 following endoplasmic reticulum stress. The polypeptide is Transmembrane protein 214-B (tmem214-b) (Xenopus laevis (African clawed frog)).